The sequence spans 338 residues: 5-dehydro-2-deoxygluconokinase (338 aa).

The protein belongs to the carbohydrate kinase PfkB family.

The catalysed reaction is 5-dehydro-2-deoxy-D-gluconate + ATP = 6-phospho-5-dehydro-2-deoxy-D-gluconate + ADP + H(+). Its pathway is polyol metabolism; myo-inositol degradation into acetyl-CoA; acetyl-CoA from myo-inositol: step 5/7. Functionally, catalyzes the phosphorylation of 5-dehydro-2-deoxy-D-gluconate (2-deoxy-5-keto-D-gluconate or DKG) to 6-phospho-5-dehydro-2-deoxy-D-gluconate (DKGP). This chain is 5-dehydro-2-deoxygluconokinase, found in Clostridium perfringens (strain ATCC 13124 / DSM 756 / JCM 1290 / NCIMB 6125 / NCTC 8237 / Type A).